A 205-amino-acid chain; its full sequence is Phosphoribosyl-dephospho-CoA transferase (205 aa).

Catalysis depends on residues Asp-134 and Asp-136.

It belongs to the MdcG family.

It catalyses the reaction apo-[malonate decarboxylase ACP] + 2'-(5''-triphospho-alpha-D-ribosyl)-3'-dephospho-CoA = holo-[malonate decarboxylase ACP] + diphosphate. In terms of biological role, transfers 2'-(5-triphosphoribosyl)-3'-dephosphocoenzyme-A to the apo-[acyl-carrier-protein] of the malonate decarboxylase to yield holo-[acyl-carrier-protein]. This is Phosphoribosyl-dephospho-CoA transferase from Klebsiella pneumoniae subsp. pneumoniae (strain ATCC 700721 / MGH 78578).